Here is a 350-residue protein sequence, read N- to C-terminus: Histidinol-phosphate aminotransferase (350 aa).

Residue K209 is modified to N6-(pyridoxal phosphate)lysine.

Belongs to the class-II pyridoxal-phosphate-dependent aminotransferase family. Histidinol-phosphate aminotransferase subfamily. Homodimer. It depends on pyridoxal 5'-phosphate as a cofactor.

The catalysed reaction is L-histidinol phosphate + 2-oxoglutarate = 3-(imidazol-4-yl)-2-oxopropyl phosphate + L-glutamate. It functions in the pathway amino-acid biosynthesis; L-histidine biosynthesis; L-histidine from 5-phospho-alpha-D-ribose 1-diphosphate: step 7/9. This chain is Histidinol-phosphate aminotransferase, found in Christiangramia forsetii (strain DSM 17595 / CGMCC 1.15422 / KT0803) (Gramella forsetii).